A 604-amino-acid polypeptide reads, in one-letter code: NADH-ubiquinone oxidoreductase chain 5 (604 aa).

Helical transmembrane passes span 2-22 (FSSLMLVSLLVLTLPIMLSIF), 41-61 (AFITSLIPTMMFIHSGQETII), 85-105 (MIFVPVALFVTWSIMEFSLWY), 115-135 (FFKYLLTFLITMMILVTANNL), 138-158 (LFIGWEGVGIMSFLLIGWWYG), 169-189 (AILYNRIGDIGFIMAMAWFLF), 209-231 (LPLLGLLLAATGKSAQFGLHPWL), 239-259 (TPVSALLHSSTMVVAGVFLLI), 271-291 (IQSLTLCLGAITTLFTAICAL), 299-318 (IIAFSTSSQLGLMIVTIGIN), 323-345 (AFLHICTHAFFKAMLFMCSGSII), 364-384 (MPFTTTSLIIGSLALTGIPFL), 411-431 (LIATSLTAVYSTRIIFFALLG), 455-475 (LLIGSIFAGFFISNNIYPTTV), 486-506 (LTALAVTILGFTLALELSLMT), and 582-602 (IKLYFLSFLITLTLSMLLFNL).

This sequence belongs to the complex I subunit 5 family. Core subunit of respiratory chain NADH dehydrogenase (Complex I) which is composed of 45 different subunits.

It localises to the mitochondrion inner membrane. It catalyses the reaction a ubiquinone + NADH + 5 H(+)(in) = a ubiquinol + NAD(+) + 4 H(+)(out). Core subunit of the mitochondrial membrane respiratory chain NADH dehydrogenase (Complex I) which catalyzes electron transfer from NADH through the respiratory chain, using ubiquinone as an electron acceptor. Essential for the catalytic activity and assembly of complex I. In Equus caballus (Horse), this protein is NADH-ubiquinone oxidoreductase chain 5 (MT-ND5).